The sequence spans 2057 residues: Rho guanine nucleotide exchange factor 17 (2057 aa).

Disordered stretches follow at residues glutamate 20–glycine 361, leucine 375–aspartate 461, and arginine 481–serine 559. A phosphoserine mark is found at serine 142 and serine 152. Residues alanine 227–serine 249 show a composition bias toward low complexity. A phosphoserine mark is found at serine 305 and serine 308. The segment covering glycine 314–glycine 323 has biased composition (gly residues). Phosphoserine is present on residues serine 324, serine 330, serine 377, serine 381, serine 389, serine 404, and serine 414. Residues arginine 382–glutamate 391 show a composition bias toward polar residues. The segment covering proline 440–asparagine 451 has biased composition (basic and acidic residues). Serine 456 is modified (phosphoserine). A compositionally biased stretch (low complexity) spans glutamate 507 to proline 524. Phosphoserine occurs at positions 538 and 611. 2 disordered regions span residues alanine 615–leucine 647 and leucine 663–alanine 952. Over residues leucine 663–histidine 672 the composition is skewed to polar residues. Serine 689 bears the Phosphoserine mark. A phosphothreonine mark is found at threonine 692 and threonine 695. Over residues proline 710–glutamate 719 the composition is skewed to polar residues. Serine 728 is subject to Phosphoserine. Over residues serine 747–threonine 760 the composition is skewed to polar residues. A compositionally biased stretch (basic and acidic residues) spans serine 820 to glutamate 829. Serine 906 is modified (phosphoserine). A compositionally biased stretch (basic residues) spans leucine 909 to arginine 920. Residues serine 922–glycine 931 are compositionally biased toward basic and acidic residues. Positions glutamine 933–serine 944 are enriched in polar residues. Serine 953 and serine 994 each carry phosphoserine. A compositionally biased stretch (pro residues) spans glycine 1015–proline 1027. Positions glycine 1015 to lysine 1054 are disordered. In terms of domain architecture, DH spans methionine 1059–glycine 1247. Serine 1324 bears the Phosphoserine mark. Disordered regions lie at residues arginine 1555 to glycine 1713 and cysteine 1983 to asparagine 2050. A compositionally biased stretch (acidic residues) spans leucine 1579–alanine 1589. Residues serine 1638–threonine 1674 are compositionally biased toward low complexity.

Acts as a guanine nucleotide exchange factor (GEF) for RhoA GTPases. This chain is Rho guanine nucleotide exchange factor 17 (Arhgef17), found in Mus musculus (Mouse).